Here is a 35-residue protein sequence, read N- to C-terminus: uncharacterized protein (35 aa).

Residues 14–34 (VVVLLAICGAMLLLRWAAMIW) form a helical membrane-spanning segment.

The protein localises to the membrane. This is an uncharacterized protein from Escherichia coli (strain K12).